Consider the following 130-residue polypeptide: Small ribosomal subunit protein uS11c (130 aa).

This sequence belongs to the universal ribosomal protein uS11 family. In terms of assembly, part of the 30S ribosomal subunit.

It is found in the plastid. It localises to the chloroplast. In Zygnema circumcarinatum (Green alga), this protein is Small ribosomal subunit protein uS11c.